Here is a 168-residue protein sequence, read N- to C-terminus: Ribosome maturation factor RimM (168 aa).

One can recognise a PRC barrel domain in the interval glutamate 96–phenylalanine 168.

The protein belongs to the RimM family. As to quaternary structure, binds ribosomal protein uS19.

It is found in the cytoplasm. Its function is as follows. An accessory protein needed during the final step in the assembly of 30S ribosomal subunit, possibly for assembly of the head region. Essential for efficient processing of 16S rRNA. May be needed both before and after RbfA during the maturation of 16S rRNA. It has affinity for free ribosomal 30S subunits but not for 70S ribosomes. In Coxiella burnetii (strain RSA 331 / Henzerling II), this protein is Ribosome maturation factor RimM.